Consider the following 252-residue polypeptide: Protein PYRAB15930 (252 aa).

This sequence belongs to the CinA family.

The sequence is that of Protein PYRAB15930 from Pyrococcus abyssi (strain GE5 / Orsay).